The sequence spans 129 residues: Small ribosomal subunit protein uS11 (129 aa).

It belongs to the universal ribosomal protein uS11 family. In terms of assembly, part of the 30S ribosomal subunit. Interacts with proteins S7 and S18. Binds to IF-3.

Functionally, located on the platform of the 30S subunit, it bridges several disparate RNA helices of the 16S rRNA. Forms part of the Shine-Dalgarno cleft in the 70S ribosome. The polypeptide is Small ribosomal subunit protein uS11 (Enterococcus faecalis (strain ATCC 700802 / V583)).